We begin with the raw amino-acid sequence, 194 residues long: MRKAERARKTNETDIKLSFHIDGEGKADIQTDVPFMTHMLDLFTKHGQFDLSIEAKGDVEIDDHHTTEDIGICLGQALLEALGDKQGIKRYGSSMVPMDEALAQVAIDLSNRPHLEFRAEFPSRKIGTFDTELVHEFLWKFALEARMNLHVIVHYGTNTHHMIEAIFKALGRALDEAALIDPRVKGIPSTKGML.

This sequence belongs to the imidazoleglycerol-phosphate dehydratase family.

Its subcellular location is the cytoplasm. The enzyme catalyses D-erythro-1-(imidazol-4-yl)glycerol 3-phosphate = 3-(imidazol-4-yl)-2-oxopropyl phosphate + H2O. Its pathway is amino-acid biosynthesis; L-histidine biosynthesis; L-histidine from 5-phospho-alpha-D-ribose 1-diphosphate: step 6/9. The sequence is that of Imidazoleglycerol-phosphate dehydratase from Bacillus licheniformis (strain ATCC 14580 / DSM 13 / JCM 2505 / CCUG 7422 / NBRC 12200 / NCIMB 9375 / NCTC 10341 / NRRL NRS-1264 / Gibson 46).